Reading from the N-terminus, the 161-residue chain is FSKKRIESVEVTKIHYDQIVKVKIQLAEEELELAGLIDSGNQLYDPLTKTPVMIMHVSSLEHCLPSWLTEQIYSKTEIPQIPENDSGWATKLRLIPFRAVGVESQFLWAIKPDSVQVDHEGSSIVVNKVLIGLNTQQLSTNGEYQCIVHPKMLISQKMVIA.

Residue Asp38 is part of the active site.

This sequence belongs to the peptidase U4 family.

In terms of biological role, probably activates the RNA polymerase sigma-35 factor at the stage II of sporulation. This Bacillus thuringiensis subsp. kurstaki protein is Putative sporulation sigma factor-processing peptidase.